The sequence spans 360 residues: MERITVTLGERSYPITIAAGLFSDPTSFWPLKAGEQAMLVTNQTLAPLYLDTLCARLEGAGVIVDRVILPDGEQYKTLAVMDQVFSALLAKPHGRDTTLIALGGGVIGDLTGFAAASYQRGVRFIQVPTTLLSQVDSSVGGKTAVNHPLGKNMIGAFYQPAAVVVDLDCLDTLPARELSSGLAEVIKYGIILDGDFFSWLEKNLDALLALDGTAMSRCIRRCCELKAEVVAADEHEHGLRALLNLGHTYGHAIEAHMGYGNWLHGEAVAAGMVMAARTAERLGQFNPQDTDRIISLLQRAGLPVKGPESMTAEEYLPHMMRDKKVLAGEMRLVLPLEIGRAELRRGVAHDIVLASIRDCQ.

NAD(+) contacts are provided by residues 71-76 (DGEQYK), 105-109 (GVIGD), 129-130 (TT), Lys-142, Lys-151, and 169-172 (CLDT). The Zn(2+) site is built by Glu-184, His-247, and His-264.

It belongs to the sugar phosphate cyclases superfamily. Dehydroquinate synthase family. It depends on Co(2+) as a cofactor. Zn(2+) serves as cofactor. Requires NAD(+) as cofactor.

It is found in the cytoplasm. The catalysed reaction is 7-phospho-2-dehydro-3-deoxy-D-arabino-heptonate = 3-dehydroquinate + phosphate. The protein operates within metabolic intermediate biosynthesis; chorismate biosynthesis; chorismate from D-erythrose 4-phosphate and phosphoenolpyruvate: step 2/7. Its function is as follows. Catalyzes the conversion of 3-deoxy-D-arabino-heptulosonate 7-phosphate (DAHP) to dehydroquinate (DHQ). The chain is 3-dehydroquinate synthase from Erwinia tasmaniensis (strain DSM 17950 / CFBP 7177 / CIP 109463 / NCPPB 4357 / Et1/99).